The following is a 146-amino-acid chain: Putative ankyrin repeat protein FPV224 (146 aa).

4 ANK repeats span residues 9–38, 42–79, 94–126, and 127–145; these read SLSTPLHHAINLLKTDIVSLLMQYKADASI, KGITPFCYAMYLGYYGVNKDILNIITRYNSINGTTRDI, YVFVNLHDAARLGYVYILKKIIYNGKNINRIDE, and YYYSALHYAVKSSNLKAVN.

This chain is Putative ankyrin repeat protein FPV224, found in Fowlpox virus (strain NVSL) (FPV).